The sequence spans 528 residues: Homoserine O-acetyltransferase (528 aa).

Residues 60–245 (LVICHALTGS…AALLTYRSRD (186 aa)) form the AB hydrolase-1 domain. Catalysis depends on Ser-154, which acts as the Nucleophile. Disordered stretches follow at residues 250-335 (RFGR…VKTQ) and 388-413 (DLSA…DATE). The segment covering 273–282 (QETTDPSVPS) has biased composition (polar residues). A compositionally biased stretch (basic and acidic residues) spans 295-304 (AWREHNDGHR). Positions 389-409 (LSAPSRDTSLSSLSSGLPSSP) are enriched in low complexity. Residues Asp-438 and His-467 contribute to the active site.

This sequence belongs to the AB hydrolase superfamily. MetX family.

The protein resides in the cytoplasm. The catalysed reaction is L-homoserine + acetyl-CoA = O-acetyl-L-homoserine + CoA. It participates in amino-acid biosynthesis; L-methionine biosynthesis via de novo pathway; O-acetyl-L-homoserine from L-homoserine: step 1/1. Inhibited by 6-carbamoyl-3a,4,5,9b-tetrahydro-3H-cyclopenta[ c]quinoline-4-carboxylic acid (CTCQC). Its function is as follows. Commits homoserine to the methionine biosynthesis pathway by catalyzing its O-acetylation. The chain is Homoserine O-acetyltransferase from Cryptococcus neoformans var. grubii serotype A (strain H99 / ATCC 208821 / CBS 10515 / FGSC 9487) (Filobasidiella neoformans var. grubii).